Consider the following 553-residue polypeptide: Putative transport protein YidE (553 aa).

Helical transmembrane passes span 4 to 24 (IALT…IGNV), 28 to 48 (GIGL…HFVS), 65 to 85 (FGLI…FFAS), 95 to 115 (LFAV…HKLF), and 158 to 178 (MSYA…MWML). RCK C-terminal domains are found at residues 191–276 (QQHE…VIGQ) and 279–361 (DTSL…VLGN). Helical transmembrane passes span 371-391 (MLPV…PVFV), 393-413 (GFPA…ALIL), 439-459 (IVLF…NTLV), 464-484 (LSWI…VGIL), 493-513 (YLTM…LAFA), and 533-553 (LVMF…WSIG).

This sequence belongs to the AAE transporter (TC 2.A.81) family. YidE subfamily.

It localises to the cell membrane. This is Putative transport protein YidE from Shigella boydii serotype 18 (strain CDC 3083-94 / BS512).